Here is a 428-residue protein sequence, read N- to C-terminus: CRS2-associated factor 1, mitochondrial (428 aa).

The transit peptide at Met1–Arg21 directs the protein to the mitochondrion. Disordered stretches follow at residues Pro33–Lys100 and His129–Val152. CRM domains follow at residues Glu155–Val253 and Glu275–Asn371. The interval Ser378–Asp428 is disordered. A compositionally biased stretch (acidic residues) spans Leu380–Asp393. Over residues Gln394 to Asp413 the composition is skewed to polar residues.

Part of large ribonucleo-protein complexes that include group IIB introns.

It localises to the mitochondrion. Its function is as follows. May be involved in the splicing of group IIB introns in mitochondria. This is CRS2-associated factor 1, mitochondrial from Oryza sativa subsp. japonica (Rice).